A 121-amino-acid chain; its full sequence is uncharacterized protein (121 aa).

Positions 10–87 constitute an RRM domain; it reads YIIIVTGVHP…EKLEVDFAFL (78 aa). The disordered stretch occupies residues 90 to 121; it reads PERAPRPSISTRSRSQSPEVQHRDRDVAMAEP. Positions 97-108 are enriched in polar residues; sequence SISTRSRSQSPE. The span at 109–121 shows a compositional bias: basic and acidic residues; the sequence is VQHRDRDVAMAEP.

It is found in the cytoplasm. It localises to the nucleus. This is an uncharacterized protein from Schizosaccharomyces pombe (strain 972 / ATCC 24843) (Fission yeast).